The following is a 392-amino-acid chain: Galactokinase (392 aa).

4 residues coordinate alpha-D-galactose: R37, E43, H44, and D46. ATP-binding residues include G136, G138, S140, and S141. D186 serves as a coordination point for alpha-D-galactose. D186 functions as the Proton acceptor in the catalytic mechanism. S230 carries the phosphoserine modification. An alpha-D-galactose-binding site is contributed by Y236.

This sequence belongs to the GHMP kinase family. GalK subfamily. In terms of assembly, homodimer.

The catalysed reaction is alpha-D-galactose + ATP = alpha-D-galactose 1-phosphate + ADP + H(+). Its pathway is carbohydrate metabolism; galactose metabolism. In terms of biological role, catalyzes the transfer of a phosphate from ATP to alpha-D-galactose and participates in the first committed step in the catabolism of galactose. The protein is Galactokinase (GALK1) of Bos taurus (Bovine).